The following is a 294-amino-acid chain: Dolichol-phosphate mannosyltransferase (294 aa).

Positions 1–27 (MSIALDMDASAKMRKQPGSSGWSTSST) are disordered. Residues 1-263 (MSIALDMDAS…QQLVELYRFR (263 aa)) are Cytoplasmic-facing. The segment covering 17–27 (PGSSGWSTSST) has biased composition (low complexity). GDP-alpha-D-mannose contacts are provided by Pro35, Glu39, Val70, Asp72, Asp123, Ala124, Asp125, Gln127, Arg151, Lys211, Arg237, and Lys243. Mg(2+) contacts are provided by Asp125 and Gln127. Mn(2+) contacts are provided by Asp125 and Gln127. Residues 264–284 (FGTVPIVFVLIVLLVLALYIW) form a helical membrane-spanning segment. The Lumenal portion of the chain corresponds to 285–294 (SHVLAPMLGA).

Belongs to the glycosyltransferase 2 family. Mg(2+) serves as cofactor. Mn(2+) is required as a cofactor. Requires Ca(2+) as cofactor.

It is found in the endoplasmic reticulum membrane. It carries out the reaction a di-trans,poly-cis-dolichyl phosphate + GDP-alpha-D-mannose = a di-trans,poly-cis-dolichyl beta-D-mannosyl phosphate + GDP. It functions in the pathway protein modification; protein glycosylation. Its function is as follows. Transfers mannose from GDP-mannose to dolichol monophosphate to form dolichol phosphate mannose (Dol-P-Man) which is the mannosyl donor in pathways leading to N-glycosylation, glycosyl phosphatidylinositol membrane anchoring, and O-mannosylation of proteins. This is Dolichol-phosphate mannosyltransferase (DPM1) from Mycosarcoma maydis (Corn smut fungus).